The primary structure comprises 232 residues: Thiamine import ATP-binding protein ThiQ (232 aa).

The ABC transporter domain maps to 2-230 (LKLTDITWLY…KASASAILGI (229 aa)). Residue 32–39 (GPSGAGKS) participates in ATP binding.

The protein belongs to the ABC transporter superfamily. Thiamine importer (TC 3.A.1.19.1) family. The complex is composed of two ATP-binding proteins (ThiQ), two transmembrane proteins (ThiP) and a solute-binding protein (ThiB).

The protein resides in the cell inner membrane. It carries out the reaction thiamine(out) + ATP + H2O = thiamine(in) + ADP + phosphate + H(+). Its function is as follows. Part of the ABC transporter complex ThiBPQ involved in thiamine import. Responsible for energy coupling to the transport system. This chain is Thiamine import ATP-binding protein ThiQ, found in Shigella boydii serotype 4 (strain Sb227).